The primary structure comprises 35 residues: Photosystem II reaction center protein T (35 aa).

Residues 3–23 traverse the membrane as a helical segment; the sequence is ALVYTFLLVSTLGIIFFAIFF.

Belongs to the PsbT family. As to quaternary structure, PSII is composed of 1 copy each of membrane proteins PsbA, PsbB, PsbC, PsbD, PsbE, PsbF, PsbH, PsbI, PsbJ, PsbK, PsbL, PsbM, PsbT, PsbY, PsbZ, Psb30/Ycf12, at least 3 peripheral proteins of the oxygen-evolving complex and a large number of cofactors. It forms dimeric complexes.

It localises to the plastid. The protein resides in the chloroplast thylakoid membrane. In terms of biological role, found at the monomer-monomer interface of the photosystem II (PS II) dimer, plays a role in assembly and dimerization of PSII. PSII is a light-driven water plastoquinone oxidoreductase, using light energy to abstract electrons from H(2)O, generating a proton gradient subsequently used for ATP formation. The chain is Photosystem II reaction center protein T from Cycas revoluta (Sago palm).